The sequence spans 254 residues: 3-oxo-5-alpha-steroid 4-dehydrogenase 2 (254 aa).

The next 4 membrane-spanning stretches (helical) occupy residues 8–28 (SPVL…LYVA), 72–92 (PLSL…VHYF), 146–166 (FCLG…SDYI), and 206–226 (LATW…FLGL).

This sequence belongs to the steroid 5-alpha reductase family.

The protein localises to the microsome membrane. Its subcellular location is the endoplasmic reticulum membrane. It carries out the reaction a 3-oxo-5alpha-steroid + NADP(+) = a 3-oxo-Delta(4)-steroid + NADPH + H(+). The catalysed reaction is 17beta-hydroxy-5alpha-androstan-3-one + NADP(+) = testosterone + NADPH + H(+). The enzyme catalyses 5alpha-pregnane-3,20-dione + NADP(+) = progesterone + NADPH + H(+). In terms of biological role, converts testosterone (T) into 5-alpha-dihydrotestosterone (DHT) and progesterone or corticosterone into their corresponding 5-alpha-3-oxosteroids. It plays a central role in sexual differentiation and androgen physiology. This is 3-oxo-5-alpha-steroid 4-dehydrogenase 2 (SRD5A2) from Macaca fascicularis (Crab-eating macaque).